Reading from the N-terminus, the 99-residue chain is Large ribosomal subunit protein bL27 (99 aa).

Positions 1-9 (MLIMNLQLF) are excised as a propeptide.

It belongs to the bacterial ribosomal protein bL27 family. Post-translationally, the N-terminus is cleaved by ribosomal processing cysteine protease Prp.

The polypeptide is Large ribosomal subunit protein bL27 (Clostridium botulinum (strain Eklund 17B / Type B)).